The primary structure comprises 800 residues: Protocadherin beta-10 (800 aa).

The signal sequence occupies residues 1-26 (MAVRELCFPRQRQVLFLFLFWGVSLA). The Extracellular segment spans residues 27-692 (GSGFGRYSVT…AEADLLTVYL (666 aa)). Cadherin domains lie at 35–133 (VTEE…APVF), 138–242 (TVLK…APQF), 247–347 (YETQ…PPEL), 352–451 (FSNS…APAF), and 456–561 (YTLF…SPFV). N-linked (GlcNAc...) asparagine glycosylation is found at Asn169 and Asn181. Residues Asn418 and Asn436 are each glycosylated (N-linked (GlcNAc...) asparagine). N-linked (GlcNAc...) asparagine glycosylation occurs at Asn567. The region spanning 568–671 (GSAPCTELVP…LVDGFSQPYL (104 aa)) is the Cadherin 6 domain. A helical transmembrane segment spans residues 693-713 (VVALASVSSLFLLSVLLFVAV). At 714 to 800 (RLCRRSRAAS…FRNSFGFNIQ (87 aa)) the chain is on the cytoplasmic side.

The protein localises to the cell membrane. Its function is as follows. Potential calcium-dependent cell-adhesion protein. May be involved in the establishment and maintenance of specific neuronal connections in the brain. The sequence is that of Protocadherin beta-10 (PCDHB10) from Homo sapiens (Human).